The primary structure comprises 492 residues: Cytochrome P450 2A2 (492 aa).

Cys437 is a binding site for heme.

It belongs to the cytochrome P450 family. Heme is required as a cofactor. In terms of tissue distribution, liver specific.

The protein resides in the endoplasmic reticulum membrane. Its subcellular location is the microsome membrane. The catalysed reaction is an organic molecule + reduced [NADPH--hemoprotein reductase] + O2 = an alcohol + oxidized [NADPH--hemoprotein reductase] + H2O + H(+). In terms of biological role, highly active in the 15-alpha-hydroxylation of testosterone. This is Cytochrome P450 2A2 (Cyp2a2) from Rattus norvegicus (Rat).